Consider the following 400-residue polypeptide: WD repeat and FYVE domain-containing protein 2 (400 aa).

6 WD repeats span residues 22 to 61 (GSQEVVNMAVIVPKEEGVISVSEDRTVRVWLKRDSGQYWP), 66 to 105 (AMPSPCSCMSFNPETRRLSIGLDNGTISEFILSEDYNKMT), 112 to 150 (AHQSRVTMILFVLELEWVLSTGQDKQFAWHCSESGQRLG), 153 to 192 (RTSAVASGLQFDVETRHVFIGDHSGQVTILKLEQENCTLV), 197 to 236 (GHTGGVTALCWDPVQRVLFSGSSDHSVIMWDIGGRKGTAI), and 240 to 279 (GHNDRVQALSYAQHTRQLISCGGDGGIVVWNMDVERQETP). An FYVE-type zinc finger spans residues 281–352 (WLDSDSCQKC…VCDSCHEAIT (72 aa)). Zn(2+) contacts are provided by Cys287, Cys290, Cys314, Cys317, Cys322, Cys325, Cys344, and Cys347. The stretch at 364 to 399 (DSKHNIVHVHFDATRGWLLTSGTDKVIKLWDMTPVV) is one WD 7 repeat.

As to quaternary structure, homodimer. Interacts (via WD repeats 1-3) with AKT1, AKT2, PRKCZ and PRKCI. Interacts with VAMP2. Forms a complex with VAMP2 and PRKCZ. Interacts with FOXO1. Forms a complex with AKT1 and FOXO1.

The protein localises to the endosome. It localises to the early endosome. It is found in the cytoplasm. In terms of biological role, acts in an adapter protein-like fashion to mediate the interaction between the kinase PRKCZ and its substrate VAMP2 and increases the PRKCZ-dependent phosphorylation of VAMP2. Positively regulates adipocyte differentiation, by facilitating the phosphorylation and thus inactivation of the anti-adipogenetic transcription factor FOXO1 by the kinase AKT1. Plays a role in endosomal control of AKT2 signaling; required for insulin-stimulated AKT2 phosphorylation and glucose uptake and insulin-stimulated phosphorylation of AKT2 substrates. Participates in transferrin receptor endocytosis. The chain is WD repeat and FYVE domain-containing protein 2 (WDFY2) from Homo sapiens (Human).